Consider the following 20-residue polypeptide: Protein YfiS (20 aa).

The polypeptide is Protein YfiS (Escherichia coli (strain K12)).